Here is a 1024-residue protein sequence, read N- to C-terminus: Protein translocase subunit SecA (1024 aa).

ATP-binding positions include Gln-143, Gly-161–Thr-165, and Asp-661. Positions His-970 to Pro-1024 are disordered. Residues Cys-1008, Cys-1010, Cys-1019, and His-1020 each contribute to the Zn(2+) site.

This sequence belongs to the SecA family. As to quaternary structure, monomer and homodimer. Part of the essential Sec protein translocation apparatus which comprises SecA, SecYEG and auxiliary proteins SecDF. Other proteins may also be involved. Requires Zn(2+) as cofactor.

Its subcellular location is the cell inner membrane. It is found in the cytoplasm. The enzyme catalyses ATP + H2O + cellular proteinSide 1 = ADP + phosphate + cellular proteinSide 2.. In terms of biological role, part of the Sec protein translocase complex. Interacts with the SecYEG preprotein conducting channel. Has a central role in coupling the hydrolysis of ATP to the transfer of proteins into and across the cell membrane, serving as an ATP-driven molecular motor driving the stepwise translocation of polypeptide chains across the membrane. This chain is Protein translocase subunit SecA, found in Pelodictyon phaeoclathratiforme (strain DSM 5477 / BU-1).